The sequence spans 77 residues: Large ribosomal subunit protein uL24 (77 aa).

The protein belongs to the universal ribosomal protein uL24 family. Part of the 50S ribosomal subunit.

Functionally, one of two assembly initiator proteins, it binds directly to the 5'-end of the 23S rRNA, where it nucleates assembly of the 50S subunit. One of the proteins that surrounds the polypeptide exit tunnel on the outside of the subunit. The sequence is that of Large ribosomal subunit protein uL24 from Sulfurovum sp. (strain NBC37-1).